The following is a 1375-amino-acid chain: DNA-directed RNA polymerase subunit beta (1375 aa).

Belongs to the RNA polymerase beta chain family. As to quaternary structure, the RNAP catalytic core consists of 2 alpha, 1 beta, 1 beta' and 1 omega subunit. When a sigma factor is associated with the core the holoenzyme is formed, which can initiate transcription.

The enzyme catalyses RNA(n) + a ribonucleoside 5'-triphosphate = RNA(n+1) + diphosphate. Its function is as follows. DNA-dependent RNA polymerase catalyzes the transcription of DNA into RNA using the four ribonucleoside triphosphates as substrates. The sequence is that of DNA-directed RNA polymerase subunit beta from Coxiella burnetii (strain CbuG_Q212) (Coxiella burnetii (strain Q212)).